Here is a 1749-residue protein sequence, read N- to C-terminus: MADEEAGGTERMEISAELPQTPQRLASWWDQQVDFYTAFLHHLAQLVPEIYFAEMDPDLEKQEESVQMSIFTPLEWYLFGEDPDICLEKLKHSGAFQLCGRVFKSGETTYSCRDCAIDPTCVLCMDCFQDSVHKNHRYKMHTSTGGGFCDCGDTEAWKTGPFCVNHEPGRAGTIKENSRCPLNEEVIVQARKIFPSVIKYVVEMTIWEEEKELPPELQIREKNERYYCVLFNDEHHSYDHVIYSLQRALDCELAEAQLHTTAIDKEGRRAVKAGAYAACQEAKEDIKSHSENVSQHPLHVEVLHSEIMAHQKFALRLGSWMNKIMSYSSDFRQIFCQACLREEPDSENPCLISRLMLWDAKLYKGARKILHELIFSSFFMEMEYKKLFAMEFVKYYKQLQKEYISDDHDRSISITALSVQMFTVPTLARHLIEEQNVISVITETLLEVLPEYLDRNNKFNFQGYSQDKLGRVYAVICDLKYILISKPTIWTERLRMQFLEGFRSFLKILTCMQGMEEIRRQVGQHIEVDPDWEAAIAIQMQLKNILLMFQEWCACDEELLLVAYKECHKAVMRCSTSFISSSKTVVQSCGHSLETKSYRVSEDLVSIHLPLSRTLAGLHVRLSRLGAVSRLHEFVSFEDFQVEVLVEYPLRCLVLVAQVVAEMWRRNGLSLISQVFYYQDVKCREEMYDKDIIMLQIGASLMDPNKFLLLVLQRYELAEAFNKTISTKDQDLIKQYNTLIEEMLQVLIYIVGERYVPGVGNVTKEEVTMREIIHLLCIEPMPHSAIAKNLPENENNETGLENVINKVATFKKPGVSGHGVYELKDESLKDFNMYFYHYSKTQHSKAEHMQKKRRKQENKDEALPPPPPPEFCPAFSKVINLLNCDIMMYILRTVFERAIDTDSNLWTEGMLQMAFHILALGLLEEKQQLQKAPEEEVTFDFYHKASRLGSSAMNIQMLLEKLKGIPQLEGQKDMITWILQMFDTVKRLREKSCLIVATTSGSESIKNDEITHDKEKAERKRKAEAARLHRQKIMAQMSALQKNFIETHKLMYDNTSEMPGKEDSIMEEESTPAVSDYSRIALGPKRGPSVTEKEVLTCILCQEEQEVKIENNAMVLSACVQKSTALTQHRGKPIELSGEALDPLFMDPDLAYGTYTGSCGHVMHAVCWQKYFEAVQLSSQQRIHVDLFDLESGEYLCPLCKSLCNTVIPIIPLQPQKINSENADALAQLLTLARWIQTVLARISGYNIRHAKGENPIPIFFNQGMGDSTLEFHSILSFGVESSIKYSNSIKEMVILFATTIYRIGLKVPPDERDPRVPMLTWSTCAFTIQAIENLLGDEGKPLFGALQNRQHNGLKALMQFAVAQRITCPQVLIQKHLVRLLSVVLPNIKSEDTPCLLSIDLFHVLVGAVLAFPSLYWDDPVDLQPSSVSSSYNHLYLFHLITMAHMLQILLTVDTGLPLAQVQEDSEEAHSASSFFAEISQYTSGSIGCDIPGWYLWVSLKNGITPYLRCAALFFHYLLGVTPPEELHTNSAEGEYSALCSYLSLPTNLFLLFQEYWDTVRPLLQRWCADPALLNCLKQKNTVVRYPRKRNSLIELPDDYSCLLNQASHFRCPRSADDERKHPVLCLFCGAILCSQNICCQEIVNGEEVGACIFHALHCGAGVCIFLKIRECRVVLVEGKARGCAYPAPYLDEYGETDPGLKRGNPLHLSRERYRKLHLVWQQHCIIEEIARSQETNQMLFGFNWQLL.

Residue alanine 2 is modified to N-acetylalanine. Residue threonine 21 is modified to Phosphothreonine. The UBR-type zinc-finger motif lies at 97–168 (QLCGRVFKSG…TGPFCVNHEP (72 aa)). The Zn(2+) site is built by cysteine 99, cysteine 112, cysteine 115, cysteine 124, cysteine 127, histidine 133, and histidine 136. Position 148 (phenylalanine 148) interacts with a peptide. Cysteine 149 contacts Zn(2+). Residue aspartate 150 coordinates a peptide. Cysteine 151 is a binding site for Zn(2+). Aspartate 153 lines the a peptide pocket. Positions 163 and 166 each coordinate Zn(2+). The disordered stretch occupies residues 842–868 (QHSKAEHMQKKRRKQENKDEALPPPPP). Residues 1019–1054 (RKRKAEAARLHRQKIMAQMSALQKNFIETHKLMYDN) form a UBC2-binding region (U2BR) region. Zn(2+) contacts are provided by cysteine 1098, cysteine 1101, cysteine 1159, histidine 1161, histidine 1164, and cysteine 1167. The RING-type; atypical zinc-finger motif lies at 1098-1201 (CILCQEEQEV…SGEYLCPLCK (104 aa)). Phosphoserine is present on serine 1179. The Zn(2+) site is built by cysteine 1197, cysteine 1200, cysteine 1627, cysteine 1630, and cysteine 1653.

It belongs to the E3 ubiquitin-protein ligase UBR1-like family. Interacts with RECQL4. Broadly expressed, with highest levels in skeletal muscle, kidney and pancreas. Present in acinar cells of the pancreas (at protein level).

The protein resides in the cytoplasm. It is found in the cytosol. It carries out the reaction S-ubiquitinyl-[E2 ubiquitin-conjugating enzyme]-L-cysteine + [acceptor protein]-L-lysine = [E2 ubiquitin-conjugating enzyme]-L-cysteine + N(6)-ubiquitinyl-[acceptor protein]-L-lysine.. It functions in the pathway protein modification; protein ubiquitination. Its activity is regulated as follows. Inhibited by the small-molecule compound RF-C11, which bears two heterovalent ligands: RF-C11 inhibits activity toward both type-1 and type-2 N-degrons. Functionally, E3 ubiquitin-protein ligase which is a component of the N-end rule pathway. Recognizes and binds proteins bearing specific N-terminal residues that are destabilizing according to the N-end rule, leading to their ubiquitination and subsequent degradation. Recognizes both type-1 and type-2 N-degrons, containing positively charged amino acids (Arg, Lys and His) and bulky and hydrophobic amino acids, respectively. Does not ubiquitinate proteins that are acetylated at the N-terminus. In contrast, it strongly binds methylated N-degrons. Binds leucine and is a negative regulator of the leucine-mTOR signaling pathway, thereby controlling cell growth. The protein is E3 ubiquitin-protein ligase UBR1 of Homo sapiens (Human).